We begin with the raw amino-acid sequence, 581 residues long: Terpene synthase 2, chloroplastic (581 aa).

The transit peptide at 1-34 (MYSLPGATMSAAPASIISSSSFVEPLLLAAASPA) directs the protein to the chloroplast. Substrate contacts are provided by R299, D336, D340, and R480. Mg(2+)-binding residues include D336 and D340. The DDXXD motif motif lies at 336-340 (DDIFD). Residues D483, S487, and E491 each coordinate Mg(2+).

The protein belongs to the terpene synthase family. In terms of assembly, monomer. It depends on Mg(2+) as a cofactor.

The protein resides in the plastid. Its subcellular location is the chloroplast. It catalyses the reaction (2E,6E)-farnesyl diphosphate + H2O = (3S,6E)-nerolidol + diphosphate. The catalysed reaction is (2E,6E,10E)-geranylgeranyl diphosphate + H2O = (6E,10E)-geranyllinalool + diphosphate. It carries out the reaction (2E)-geranyl diphosphate + H2O = (S)-linalool + diphosphate. The protein operates within secondary metabolite biosynthesis; terpenoid biosynthesis. In terms of biological role, involved in sesquiterpene (C15), diterpene (C20) and monoterpene (C10) biosynthesis. Has sesquiterpene synthase activity, converting farnesyl diphosphate to nerolidol, the precursor of the volatile C11-homoterpene (E)-3,8-dimethyl-1,4,7-nonatriene (DMNT). Has diterpene synthase activity, converting geranylgeranyl diphosphate to (E,E)-geranyllinalool, the precursor of the volatile C16-homoterpene (E,E)-4,8,12-trimethyltrideca 1,3,7,11-tetraene (TMTT). Has monoterpene synthase activity, converting geranyl diphosphate into linalool. Forms only the S-isomers of the three tertiary terpene alcohols. The protein is Terpene synthase 2, chloroplastic of Zea mays (Maize).